The following is a 204-amino-acid chain: MVGHLHLQAMGDTREQSRDGLLDSPDSGLPPSPSPSPPFYALSPGTLDTRTTTEAPAAPSLFQTPPALEMRSRLLPVFFGESIEVDPEPAHEIRCNSEITYASERYFRDKIFYAPVPTVTAYSETIVAAPNCTWRSYRSQLTLEPRPRALRFGSTAIIFPKLARSSFRTTLHCSLGQPRHWYSSSLQLRRCGDPTPGPSCPDVL.

Positions 1-52 (MVGHLHLQAMGDTREQSRDGLLDSPDSGLPPSPSPSPPFYALSPGTLDTRTT) are disordered. The segment covering 12–21 (DTREQSRDGL) has biased composition (basic and acidic residues). Pro residues predominate over residues 28–38 (GLPPSPSPSPP). At Arg-151 the chain carries Asymmetric dimethylarginine.

It belongs to the Refilin family. As to quaternary structure, interacts with FLNA and FLNB. Detected in various tissues, with highest expression in lung, followed by spleen.

Its subcellular location is the cytoplasm. The protein resides in the cytoskeleton. Involved in the regulation of the perinuclear actin network and nuclear shape through interaction with filamins. Plays an essential role in the formation of cartilaginous skeletal elements. This is Refilin-A (Rflna) from Mus musculus (Mouse).